The primary structure comprises 440 residues: Inner membrane metabolite transport protein YhjE (440 aa).

Residues 1–34 (MQATATTLDHEQEYTPINSRNKVLVASLIGTAIE) lie on the Cytoplasmic side of the membrane. The helical transmembrane segment at 35 to 55 (FFDFYIYATAAVIVFPHIFFP) threads the bilayer. Over 56-66 (QGDPTAATLQS) the chain is Periplasmic. Residues 67–87 (LATFAIAFVARPIGSAVFGHF) traverse the membrane as a helical segment. Residues 88 to 108 (GDRVGRKATLVASLLTMGIST) lie on the Cytoplasmic side of the membrane. 2 helical membrane passes run 109–129 (VVIGLLPGYATIGIFAPLLLA) and 130–150 (LARFGQGLGLGGEWGGAALLA). The Cytoplasmic portion of the chain corresponds to 151-167 (TENAPPRKRALYGSFPQ). Residues 168-188 (LGAPIGFFFANGTFLLLSWLL) traverse the membrane as a helical segment. Over 189-192 (TDEQ) the chain is Periplasmic. Residues 193-213 (FMSWGWRVPFIFSAVLVIIGL) form a helical membrane-spanning segment. Over 214 to 248 (YVRVSLHESPVFEKVAKAKKQVKIPLGTLLTKHVR) the chain is Cytoplasmic. Residues 249–269 (VTVLGTFIMLATYTLFYIMTV) traverse the membrane as a helical segment. Topologically, residues 270 to 289 (YSMTFSTAAAPVGLGLPRNE) are periplasmic. A helical membrane pass occupies residues 290 to 310 (VLWMLMMAVIGFGVMVPVAGL). The Cytoplasmic portion of the chain corresponds to 311–320 (LADAFGRRKS). The chain crosses the membrane as a helical span at residues 321-341 (MVIITTLIILFALFAFNPLLG). The Periplasmic portion of the chain corresponds to 342-345 (SGNP). A helical membrane pass occupies residues 346-366 (ILVFAFLLLGLSLMGLTFGPM). The Cytoplasmic portion of the chain corresponds to 367-384 (GALLPELFPTEVRYTGAS). A helical transmembrane segment spans residues 385-405 (FSYNVASILGASVAPYIAAWL). At 406 to 410 (QTNYG) the chain is on the periplasmic side. Residues 411 to 431 (LGAVGLYLAAMAGLTLIALLL) form a helical membrane-spanning segment. The Cytoplasmic segment spans residues 432-440 (THETRHQSL).

The protein belongs to the major facilitator superfamily. Metabolite:H+ Symporter (MHS) family (TC 2.A.1.6) family.

It localises to the cell inner membrane. This is Inner membrane metabolite transport protein YhjE (yhjE) from Escherichia coli (strain K12).